Here is a 248-residue protein sequence, read N- to C-terminus: mRNA-decapping protein OPG122 (248 aa).

The Nudix hydrolase domain occupies 45–227 (HKRVSVSAIL…IAKYALDTAK (183 aa)). The Nudix box signature appears at 125 to 147 (GGIPKRGENVPECLSREIKEEVN).

It belongs to the Nudix hydrolase family. In terms of assembly, interacts with the late transcription elongation factor VLTF-4/OPG110. Interacts with the late transcription factors VLTF-1. The cofactor is Mg(2+). Mn(2+) is required as a cofactor.

The protein localises to the host mitochondrion. Its function is as follows. Acts with RNA polymerase to initiate transcription from late gene promoters. This Cynomys gunnisoni (Gunnison's prairie dog) protein is mRNA-decapping protein OPG122 (OPG122).